Reading from the N-terminus, the 215-residue chain is Cytidylate kinase (215 aa).

Residue 11–19 (GPTASGKGT) participates in ATP binding.

It belongs to the cytidylate kinase family. Type 1 subfamily.

It localises to the cytoplasm. It catalyses the reaction CMP + ATP = CDP + ADP. It carries out the reaction dCMP + ATP = dCDP + ADP. This chain is Cytidylate kinase, found in Polynucleobacter necessarius subsp. necessarius (strain STIR1).